Consider the following 264-residue polypeptide: ATP synthase subunit a (264 aa).

Helical transmembrane passes span 32-52 (IDSL…FHSV), 89-109 (VIAP…FMDM), 134-154 (DLNI…YYSI), 177-197 (IPVN…SLAL), 208-228 (LIFI…TLGV), and 235-255 (LIFH…LTIV).

The protein belongs to the ATPase A chain family. In terms of assembly, F-type ATPases have 2 components, CF(1) - the catalytic core - and CF(0) - the membrane proton channel. CF(1) has five subunits: alpha(3), beta(3), gamma(1), delta(1), epsilon(1). CF(0) has three main subunits: a(1), b(2) and c(9-12). The alpha and beta chains form an alternating ring which encloses part of the gamma chain. CF(1) is attached to CF(0) by a central stalk formed by the gamma and epsilon chains, while a peripheral stalk is formed by the delta and b chains.

The protein resides in the cell inner membrane. Functionally, key component of the proton channel; it plays a direct role in the translocation of protons across the membrane. This Shewanella piezotolerans (strain WP3 / JCM 13877) protein is ATP synthase subunit a.